We begin with the raw amino-acid sequence, 971 residues long: Translation initiation factor IF-2 (971 aa).

Residues 49–63 show a composition bias toward basic and acidic residues; sequence HLRKSHGATDGDKRK. Disordered stretches follow at residues 49-85 and 99-386; these read HLRK…KART and RDDV…PTEP. The span at 105–114 shows a compositional bias: low complexity; the sequence is GAEQGQAQVA. Residues 121-181 are compositionally biased toward basic and acidic residues; sequence ELKRREEEAR…EEEAAAKRAA (61 aa). The span at 182–200 shows a compositional bias: low complexity; that stretch reads AEAAAAQQAAAQQAAAEQE. The span at 209–260 shows a compositional bias: basic and acidic residues; the sequence is DEARAAAERAAQREAAKKAEDAAREAADKARAEQEEISKRRAAAEAEARAIR. Positions 303 to 325 are enriched in low complexity; it reads ARPAVKKPAGAAAPATTQAPAGA. Over residues 355–368 the composition is skewed to gly residues; that stretch reads SSGGVDRGWRGGPK. The tr-type G domain occupies 471-640; it reads PRPPVVTVMG…LLQAEVLELK (170 aa). The tract at residues 480–487 is G1; the sequence is GHVDHGKT. 480 to 487 contributes to the GTP binding site; sequence GHVDHGKT. The interval 505–509 is G2; that stretch reads GITQH. The tract at residues 526–529 is G3; it reads DTPG. Residues 526–530 and 580–583 each bind GTP; these read DTPGH and NKID. Residues 580 to 583 are G4; sequence NKID. The interval 616–618 is G5; the sequence is SAK.

The protein belongs to the TRAFAC class translation factor GTPase superfamily. Classic translation factor GTPase family. IF-2 subfamily.

Its subcellular location is the cytoplasm. Functionally, one of the essential components for the initiation of protein synthesis. Protects formylmethionyl-tRNA from spontaneous hydrolysis and promotes its binding to the 30S ribosomal subunits. Also involved in the hydrolysis of GTP during the formation of the 70S ribosomal complex. The polypeptide is Translation initiation factor IF-2 (Burkholderia cenocepacia (strain ATCC BAA-245 / DSM 16553 / LMG 16656 / NCTC 13227 / J2315 / CF5610) (Burkholderia cepacia (strain J2315))).